The chain runs to 256 residues: Chlorophyll a-b binding protein CP24 10A, chloroplastic (256 aa).

2 helical membrane-spanning segments follow: residues 106–126 and 134–154; these read WAMA…IPWF and AIAP…MGWV.

It belongs to the ELIP/psbS family.

The protein resides in the plastid. The protein localises to the chloroplast thylakoid membrane. The chain is Chlorophyll a-b binding protein CP24 10A, chloroplastic (CAP10A) from Solanum lycopersicum (Tomato).